Here is a 257-residue protein sequence, read N- to C-terminus: Diphthine synthase (257 aa).

S-adenosyl-L-methionine is bound by residues leucine 9, aspartate 85, valine 88, 113–114 (SI), leucine 164, alanine 207, and histidine 232.

It belongs to the diphthine synthase family. In terms of assembly, homodimer.

The catalysed reaction is 2-[(3S)-amino-3-carboxypropyl]-L-histidyl-[translation elongation factor 2] + 3 S-adenosyl-L-methionine = diphthine-[translation elongation factor 2] + 3 S-adenosyl-L-homocysteine + 3 H(+). It functions in the pathway protein modification; peptidyl-diphthamide biosynthesis. In terms of biological role, S-adenosyl-L-methionine-dependent methyltransferase that catalyzes the trimethylation of the amino group of the modified target histidine residue in translation elongation factor 2 (EF-2), to form an intermediate called diphthine. The three successive methylation reactions represent the second step of diphthamide biosynthesis. In Methanococcus aeolicus (strain ATCC BAA-1280 / DSM 17508 / OCM 812 / Nankai-3), this protein is Diphthine synthase.